Here is a 158-residue protein sequence, read N- to C-terminus: UPF0098 protein YbhB (158 aa).

The protein belongs to the UPF0098 family. In terms of assembly, homodimer.

It is found in the cytoplasm. This is UPF0098 protein YbhB (ybhB) from Escherichia coli (strain K12).